Here is a 147-residue protein sequence, read N- to C-terminus: Hemoglobin subunit epsilon (147 aa).

The Globin domain occupies 3 to 147 (HWSAEEKQLI…VAHALPRKYH (145 aa)). Residues His-64 and His-93 each contribute to the heme b site.

It belongs to the globin family. Heterotetramer of two epsilon chains and two alpha chains. As to expression, red blood cells.

In terms of biological role, beta-type chain found in early embryos. This chain is Hemoglobin subunit epsilon (HBE), found in Cairina moschata (Muscovy duck).